The primary structure comprises 378 residues: Mevalonate kinase (378 aa).

ATP contacts are provided by residues lysine 10, serine 138, and 143–149 (GSGLGSS). Mg(2+) contacts are provided by serine 149 and glutamate 193. Aspartate 204 acts as the Proton acceptor in catalysis.

The protein belongs to the GHMP kinase family. Mevalonate kinase subfamily. Mg(2+) is required as a cofactor.

It localises to the cytoplasm. The enzyme catalyses (R)-mevalonate + ATP = (R)-5-phosphomevalonate + ADP + H(+). It functions in the pathway isoprenoid biosynthesis; isopentenyl diphosphate biosynthesis via mevalonate pathway; isopentenyl diphosphate from (R)-mevalonate: step 1/3. Its activity is regulated as follows. Its activity is inhibited in vitro by geranyl pyrophosphate (GPP) and farnesyl pyrophosphate (FPP) that bind competitively at the ATP-binding site on the enzyme. Its function is as follows. Catalyzes the phosphorylation of mevalonate to mevalonate 5-phosphate, a key step in isoprenoid and cholesterol biosynthesis. The polypeptide is Mevalonate kinase (Arabidopsis thaliana (Mouse-ear cress)).